Consider the following 339-residue polypeptide: Aspartate carbamoyltransferase catalytic subunit (339 aa).

R59 and T60 together coordinate carbamoyl phosphate. K87 lines the L-aspartate pocket. 3 residues coordinate carbamoyl phosphate: R109, H142, and Q145. R182 and R253 together coordinate L-aspartate. Carbamoyl phosphate contacts are provided by G294 and P295.

Belongs to the aspartate/ornithine carbamoyltransferase superfamily. ATCase family. Heterododecamer (2C3:3R2) of six catalytic PyrB chains organized as two trimers (C3), and six regulatory PyrI chains organized as three dimers (R2).

The enzyme catalyses carbamoyl phosphate + L-aspartate = N-carbamoyl-L-aspartate + phosphate + H(+). Its pathway is pyrimidine metabolism; UMP biosynthesis via de novo pathway; (S)-dihydroorotate from bicarbonate: step 2/3. Catalyzes the condensation of carbamoyl phosphate and aspartate to form carbamoyl aspartate and inorganic phosphate, the committed step in the de novo pyrimidine nucleotide biosynthesis pathway. In Prochlorococcus marinus (strain NATL1A), this protein is Aspartate carbamoyltransferase catalytic subunit.